The primary structure comprises 327 residues: Methionine import ATP-binding protein MetN (327 aa).

The ABC transporter domain maps to 3–239 (VELKNIEKIY…PKHAVTKELL (237 aa)). ATP is bound at residue 36–43 (GYSGAGKS).

Belongs to the ABC transporter superfamily. Methionine importer (TC 3.A.1.24) family. As to quaternary structure, the complex is composed of two ATP-binding proteins (MetN), two transmembrane proteins (MetI) and a solute-binding protein (MetQ).

The protein localises to the cell inner membrane. The catalysed reaction is L-methionine(out) + ATP + H2O = L-methionine(in) + ADP + phosphate + H(+). It catalyses the reaction D-methionine(out) + ATP + H2O = D-methionine(in) + ADP + phosphate + H(+). In terms of biological role, part of the ABC transporter complex MetNIQ involved in methionine import. Responsible for energy coupling to the transport system. This Helicobacter pylori (strain HPAG1) protein is Methionine import ATP-binding protein MetN.